The chain runs to 537 residues: Glucans biosynthesis protein D (537 aa).

The segment at residues 1–30 (MLMYRRDFLKSVTAAWVAFGLPNPLGGAFA) is a signal peptide (tat-type signal).

Belongs to the OpgD/OpgG family. Predicted to be exported by the Tat system. The position of the signal peptide cleavage has not been experimentally proven.

The protein localises to the periplasm. It participates in glycan metabolism; osmoregulated periplasmic glucan (OPG) biosynthesis. Probably involved in the control of the structural glucose backbone of osmoregulated periplasmic glucans (OPGs). The protein is Glucans biosynthesis protein D of Xylella fastidiosa (strain M12).